Reading from the N-terminus, the 90-residue chain is Putative defensin-like protein 64 (90 aa).

The signal sequence occupies residues 1 to 23; the sequence is MWGRQIVLKIFFLVLSCVIVIET. Cystine bridges form between cysteine 33-cysteine 56 and cysteine 42-cysteine 77.

The protein belongs to the DEFL family.

The protein localises to the secreted. The sequence is that of Putative defensin-like protein 64 from Arabidopsis thaliana (Mouse-ear cress).